The following is a 509-amino-acid chain: Scavenger receptor class B member 1 (509 aa).

Residues 1-11 (MGSRSRARQVA) are Cytoplasmic-facing. The chain crosses the membrane as a helical span at residues 12-32 (AALGFVGLLLAALGAVMIVMV). The Extracellular segment spans residues 33–439 (PSIIKQQVLK…FYTQLVLMPK (407 aa)). N-linked (GlcNAc...) asparagine glycans are attached at residues N102, N108, N173, N212, N255, N310, N330, and N383. An intrachain disulfide couples C251 to C384. The helical transmembrane segment at 440-460 (VLHYAQYVLLALGCVLLFIPI) threads the bilayer. Topologically, residues 461-509 (VYQIRSQEKCYLFWSSSKKGSKDKEAIQAYSESLMTPAPKGTVLQEARL) are cytoplasmic.

The protein belongs to the CD36 family. As to quaternary structure, the C-terminal region binds to PDZK1. Post-translationally, N-glycosylated. In terms of processing, the six cysteines of the extracellular domain are all involved in intramolecular disulfide bonds.

The protein resides in the cell membrane. Its subcellular location is the membrane. It localises to the caveola. Its function is as follows. Receptor for different ligands such as phospholipids, cholesterol ester, lipoproteins, phosphatidylserine and apoptotic cells. Receptor for HDL, mediating selective uptake of cholesteryl ether and HDL-dependent cholesterol efflux. Also facilitates the flux of free and esterified cholesterol between the cell surface and apoB-containing lipoproteins and modified lipoproteins, although less efficiently than HDL. May be involved in the phagocytosis of apoptotic cells, via its phosphatidylserine binding activity. The chain is Scavenger receptor class B member 1 (SCARB1) from Sus scrofa (Pig).